Consider the following 137-residue polypeptide: Cellular retinoic acid-binding protein 1 (137 aa).

The Nuclear localization signal motif lies at 21 to 31 (KALGVNAMLRK). 132-134 (RIY) contributes to the all-trans-retinoate binding site.

The protein belongs to the calycin superfamily. Fatty-acid binding protein (FABP) family.

Its subcellular location is the cytoplasm. Functionally, cytosolic CRABPs may regulate the access of retinoic acid to the nuclear retinoic acid receptors. This is Cellular retinoic acid-binding protein 1 (Crabp1) from Mus musculus (Mouse).